The chain runs to 333 residues: N-acetyl-gamma-glutamyl-phosphate reductase (333 aa).

Cys-145 is a catalytic residue.

This sequence belongs to the NAGSA dehydrogenase family. Type 1 subfamily.

Its subcellular location is the cytoplasm. It carries out the reaction N-acetyl-L-glutamate 5-semialdehyde + phosphate + NADP(+) = N-acetyl-L-glutamyl 5-phosphate + NADPH + H(+). Its pathway is amino-acid biosynthesis; L-arginine biosynthesis; N(2)-acetyl-L-ornithine from L-glutamate: step 3/4. Its function is as follows. Catalyzes the NADPH-dependent reduction of N-acetyl-5-glutamyl phosphate to yield N-acetyl-L-glutamate 5-semialdehyde. This is N-acetyl-gamma-glutamyl-phosphate reductase from Salinispora arenicola (strain CNS-205).